The following is a 570-amino-acid chain: Formate--tetrahydrofolate ligase (570 aa).

65–72 provides a ligand contact to ATP; it reads TPHGEGKT.

Belongs to the formate--tetrahydrofolate ligase family.

It catalyses the reaction (6S)-5,6,7,8-tetrahydrofolate + formate + ATP = (6R)-10-formyltetrahydrofolate + ADP + phosphate. The protein operates within one-carbon metabolism; tetrahydrofolate interconversion. The polypeptide is Formate--tetrahydrofolate ligase (Shewanella putrefaciens (strain CN-32 / ATCC BAA-453)).